A 252-amino-acid polypeptide reads, in one-letter code: Homeobox protein EMX2 (252 aa).

Positions 154–213 (PKRIRTAFSPSQLLRLEHAFEKNHYVVGAERKQLAHSLSLTETQVKVWFQNRRTKFKRQK) form a DNA-binding region, homeobox. The segment at 212–252 (QKLEEEGSDSQQKKKGTHHINRWRIATKQASPEEIDVTSDD) is disordered. Residues 224 to 233 (KKKGTHHINR) are compositionally biased toward basic residues.

Belongs to the EMX homeobox family. In terms of assembly, interacts with translation initiation factor EIF4E. Cerebral cortex.

It is found in the nucleus. Its subcellular location is the cell projection. It localises to the axon. Transcription factor, which in cooperation with EMX1, acts to generate the boundary between the roof and archipallium in the developing brain. May function in combination with OTX1/2 to specify cell fates in the developing central nervous system. In the inner ear, it controls the distribution of GPR156 at hair cell boundaries, and regulates the organization of stereociliary bundles in opposite orientations across the line of polarity reversal (LPR). The polypeptide is Homeobox protein EMX2 (EMX2) (Homo sapiens (Human)).